Here is a 258-residue protein sequence, read N- to C-terminus: Aspartate/glutamate leucyltransferase (258 aa).

This sequence belongs to the R-transferase family. Bpt subfamily.

The protein resides in the cytoplasm. It carries out the reaction N-terminal L-glutamyl-[protein] + L-leucyl-tRNA(Leu) = N-terminal L-leucyl-L-glutamyl-[protein] + tRNA(Leu) + H(+). The enzyme catalyses N-terminal L-aspartyl-[protein] + L-leucyl-tRNA(Leu) = N-terminal L-leucyl-L-aspartyl-[protein] + tRNA(Leu) + H(+). In terms of biological role, functions in the N-end rule pathway of protein degradation where it conjugates Leu from its aminoacyl-tRNA to the N-termini of proteins containing an N-terminal aspartate or glutamate. This chain is Aspartate/glutamate leucyltransferase, found in Rhodopseudomonas palustris (strain ATCC BAA-98 / CGA009).